A 60-amino-acid polypeptide reads, in one-letter code: uncharacterized protein (60 aa).

Residues 38 to 58 (SILAGGIIPVLFFFPLFLFLY) form a helical membrane-spanning segment.

Its subcellular location is the membrane. This is an uncharacterized protein from Saccharomyces cerevisiae (strain ATCC 204508 / S288c) (Baker's yeast).